Consider the following 447-residue polypeptide: Exodeoxyribonuclease 7 large subunit (447 aa).

Belongs to the XseA family. As to quaternary structure, heterooligomer composed of large and small subunits.

It is found in the cytoplasm. It carries out the reaction Exonucleolytic cleavage in either 5'- to 3'- or 3'- to 5'-direction to yield nucleoside 5'-phosphates.. Bidirectionally degrades single-stranded DNA into large acid-insoluble oligonucleotides, which are then degraded further into small acid-soluble oligonucleotides. The chain is Exodeoxyribonuclease 7 large subunit from Geobacter sulfurreducens (strain ATCC 51573 / DSM 12127 / PCA).